We begin with the raw amino-acid sequence, 20 residues long: Dahlein-5.1 (20 aa).

Expressed by the skin dorsal glands.

The protein localises to the secreted. Its function is as follows. Has no antimicrobial activity. Strongly inhibits the formation of NO by neuronal nitric oxide synthase at micromolar concentrations. Acts by a non-competitive mechanism, probably by binding to calcium/calmodulin and as a consequence blocking calmodulin attachment to nNOS. The polypeptide is Dahlein-5.1 (Ranoidea dahlii (Dahl's aquatic frog)).